A 236-amino-acid chain; its full sequence is Phosphoribosylaminoimidazole-succinocarboxamide synthase (236 aa).

It belongs to the SAICAR synthetase family.

The catalysed reaction is 5-amino-1-(5-phospho-D-ribosyl)imidazole-4-carboxylate + L-aspartate + ATP = (2S)-2-[5-amino-1-(5-phospho-beta-D-ribosyl)imidazole-4-carboxamido]succinate + ADP + phosphate + 2 H(+). The protein operates within purine metabolism; IMP biosynthesis via de novo pathway; 5-amino-1-(5-phospho-D-ribosyl)imidazole-4-carboxamide from 5-amino-1-(5-phospho-D-ribosyl)imidazole-4-carboxylate: step 1/2. The protein is Phosphoribosylaminoimidazole-succinocarboxamide synthase of Chlorobium phaeobacteroides (strain DSM 266 / SMG 266 / 2430).